We begin with the raw amino-acid sequence, 555 residues long: NAD-dependent protein deacetylase sirtuin-1 (555 aa).

Positions 39-46 match the Nuclear localization signal motif; that stretch reads PPKRKKRK. Positions 44-304 constitute a Deacetylase sirtuin-type domain; that stretch reads KRKDINTIED…NELCHRLGGE (261 aa). At lysine 46 the chain carries N6-acetyllysine. Residues 64–67 form a required for interaction with the sumoylated form of CCAR2 region; sequence IIVL. Residues 69–88 and 153–156 contribute to the NAD(+) site; these read GAGVSVSCGIPDFRSRDGIY and QNID. Residue histidine 171 is the Proton acceptor of the active site. Zn(2+) is bound by residues cysteine 179 and cysteine 182. The residue at position 185 (lysine 185) is an N6-acetyllysine. Residues cysteine 203 and cysteine 206 each coordinate Zn(2+). 2 positions are modified to S-nitrosocysteine: cysteine 203 and cysteine 206. Position 238 is an N6-acetyllysine (lysine 238). Residues 241 to 247 carry the Nuclear export signal motif; that stretch reads VDLLIVI. NAD(+) is bound by residues 248–250, 273–275, and cysteine 290; these read GSS and NRE. An N6-acetyllysine modification is found at lysine 321. The disordered stretch occupies residues 335–354; it reads LPPTPLHISEDSSSPERTVP. A Phosphothreonine modification is found at threonine 338. Serine 343 is modified (phosphoserine). Polar residues predominate over residues 345 to 354; the sequence is DSSSPERTVP. A Phosphothreonine modification is found at threonine 352. Lysine 417 is modified (N6-acetyllysine). Serine 466 and serine 468 each carry phosphoserine. The segment at 469–529 is disordered; it reads EDDALSSSSC…GGSGADGGDQ (61 aa). Over residues 473–493 the composition is skewed to low complexity; the sequence is LSSSSCGSNSDSGTCQSPSLE. Positions 494–514 are enriched in acidic residues; it reads EPLEDESEIEEFYNGLEDDAD. A Phosphoserine modification is found at serine 552.

This sequence belongs to the sirtuin family. Class I subfamily. Interacts with XBP1 isoform 2. Found in a complex with PCAF and MYOD1. Interacts with FOXO1; the interaction deacetylates FOXO1, resulting in its nuclear retention and promotion of its transcriptional activity Component of the eNoSC complex, composed of SIRT1, SUV39H1 and RRP8. Interacts with HES1, HEY2 and PML. Interacts with RPS19BP1/AROS. Interacts with CCAR2 (via N-terminus); the interaction disrupts the interaction between SIRT1 and p53/TP53. Interacts with SETD7; the interaction induces the dissociation of SIRT1 from p53/TP53 and increases p53/TP53 activity. Interacts with MYCN, NR1I2, CREBZF, TSC2, TLE1, FOS, JUN, NR0B2, PPARG, NCOR, IRS1, IRS2 and NMNAT1. Interacts with HNF1A; the interaction occurs under nutrient restriction. Interacts with SUZ12; the interaction mediates the association with the PRC4 histone methylation complex which is specific as an association with PCR2 and PCR3 complex variants is not found. Interacts with HIV-1 tat. Interacts with BCL6; leads to a epigenetic repression of specific target genes. Interacts with CLOCK, BMAL1 and PER2. Interacts with PPARA; the interaction seems to be modulated by NAD(+) levels. Interacts with NR1H3 and this interaction is inhibited in the presence of CCAR2. Interacts with CHEK2. Interacts with p53/TP53. Exhibits a preferential interaction with sumoylated CCAR2 over its unmodified form. Interacts with PACS2. Interacts with SIRT7. Interacts with PUS7. Interacts with TULP3. Interacts with MORN3; the interaction enhances the ubiquitination of p53/TP53. Requires Zn(2+) as cofactor. In terms of processing, methylated on multiple lysine residues; methylation is enhanced after DNA damage and is dispensable for deacetylase activity toward p53/TP53. Phosphorylated. Phosphorylated by STK4/MST1, resulting in inhibition of SIRT1-mediated p53/TP53 deacetylation. Phosphorylation by MAPK8/JNK1 at Thr-338 leads to increased nuclear localization and enzymatic activity. Phosphorylation at Thr-338 by DYRK1A and DYRK3 activates deacetylase activity and promotes cell survival. Phosphorylated by CaMK2, leading to increased p53/TP53 and NF-kappa-B p65/RELA deacetylation activity. Post-translationally, S-nitrosylated by GAPDH, leading to inhibit the NAD-dependent protein deacetylase activity. In terms of processing, acetylated at various Lys residues. Deacetylated via an autocatalytic mechanism. Autodeacetylation at Lys-46 promotes its protein deacetylase activity. Ubiquitinated; leading to degradation. Deubiquitinated by USP22; leading to stabilization.

It is found in the nucleus. Its subcellular location is the PML body. It localises to the cytoplasm. The catalysed reaction is N(6)-acetyl-L-lysyl-[protein] + NAD(+) + H2O = 2''-O-acetyl-ADP-D-ribose + nicotinamide + L-lysyl-[protein]. It catalyses the reaction N(6)-propanoyl-L-lysyl-[protein] + NAD(+) + H2O = 3''-O-propanoyl-ADP-D-ribose + nicotinamide + L-lysyl-[protein]. The enzyme catalyses N(6)-(2E)-butenoyl-L-lysyl-[protein] + NAD(+) + H2O = 2''-O-(2E)-but-2-enoyl-ADP-D-ribose + nicotinamide + L-lysyl-[protein]. With respect to regulation, inhibited by nicotinamide. Activated by resveratrol (3,5,4'-trihydroxy-trans-stilbene), butein (3,4,2',4'-tetrahydroxychalcone), piceatannol (3,5,3',4'-tetrahydroxy-trans-stilbene), Isoliquiritigenin (4,2',4'-trihydroxychalcone), fisetin (3,7,3',4'-tetrahydroxyflavone) and quercetin (3,5,7,3',4'-pentahydroxyflavone). MAPK8/JNK1 and RPS19BP1/AROS act as positive regulators of deacetylation activity. Negatively regulated by CCAR2. Its function is as follows. NAD-dependent protein deacetylase that links transcriptional regulation directly to intracellular energetics and participates in the coordination of several separated cellular functions such as cell cycle, response to DNA damage, metabolism, apoptosis and autophagy. Can modulate chromatin function through deacetylation of histones and can promote alterations in the methylation of histones and DNA, leading to transcriptional repression. Deacetylates a broad range of transcription factors and coregulators, thereby regulating target gene expression positively and negatively. Serves as a sensor of the cytosolic ratio of NAD(+)/NADH which is altered by glucose deprivation and metabolic changes associated with caloric restriction. Is essential in skeletal muscle cell differentiation and in response to low nutrients mediates the inhibitory effect on skeletal myoblast differentiation which also involves 5'-AMP-activated protein kinase (AMPK) and nicotinamide phosphoribosyltransferase (NAMPT). Component of the eNoSC (energy-dependent nucleolar silencing) complex, a complex that mediates silencing of rDNA in response to intracellular energy status and acts by recruiting histone-modifying enzymes. The eNoSC complex is able to sense the energy status of cell: upon glucose starvation, elevation of NAD(+)/NADP(+) ratio activates SIRT1, leading to histone H3 deacetylation followed by dimethylation of H3 at 'Lys-9' (H3K9me2) by SUV39H1 and the formation of silent chromatin in the rDNA locus. Deacetylates 'Lys-266' of SUV39H1, leading to its activation. Inhibits skeletal muscle differentiation by deacetylating PCAF and MYOD1. Deacetylates H2A and 'Lys-26' of H1-4. Deacetylates 'Lys-16' of histone H4 (in vitro). Involved in NR0B2/SHP corepression function through chromatin remodeling: Recruited to LRH1 target gene promoters by NR0B2/SHP thereby stimulating histone H3 and H4 deacetylation leading to transcriptional repression. Proposed to contribute to genomic integrity via positive regulation of telomere length; however, reports on localization to pericentromeric heterochromatin are conflicting. Proposed to play a role in constitutive heterochromatin (CH) formation and/or maintenance through regulation of the available pool of nuclear SUV39H1. Upon oxidative/metabolic stress decreases SUV39H1 degradation by inhibiting SUV39H1 polyubiquitination by MDM2. This increase in SUV39H1 levels enhances SUV39H1 turnover in CH, which in turn seems to accelerate renewal of the heterochromatin which correlates with greater genomic integrity during stress response. Deacetylates 'Lys-382' of p53/TP53 and impairs its ability to induce transcription-dependent proapoptotic program and modulate cell senescence. Deacetylates TAF1B and thereby represses rDNA transcription by the RNA polymerase I. Deacetylates MYC, promotes the association of MYC with MAX and decreases MYC stability leading to compromised transformational capability. Deacetylates FOXO3 in response to oxidative stress thereby increasing its ability to induce cell cycle arrest and resistance to oxidative stress but inhibiting FOXO3-mediated induction of apoptosis transcriptional activity; also leading to FOXO3 ubiquitination and protesomal degradation. Appears to have a similar effect on MLLT7/FOXO4 in regulation of transcriptional activity and apoptosis. Deacetylates DNMT1; thereby impairs DNMT1 methyltransferase-independent transcription repressor activity, modulates DNMT1 cell cycle regulatory function and DNMT1-mediated gene silencing. Deacetylates RELA/NF-kappa-B p65 thereby inhibiting its transactivating potential and augments apoptosis in response to TNF-alpha. Deacetylates HIF1A, KAT5/TIP60, RB1 and HIC1. Deacetylates FOXO1 resulting in its nuclear retention and enhancement of its transcriptional activity leading to increased gluconeogenesis in liver. Inhibits E2F1 transcriptional activity and apoptotic function, possibly by deacetylation. Involved in HES1- and HEY2-mediated transcriptional repression. In cooperation with MYCN seems to be involved in transcriptional repression of DUSP6/MAPK3 leading to MYCN stabilization by phosphorylation at 'Ser-62'. Deacetylates MEF2D. Required for antagonist-mediated transcription suppression of AR-dependent genes which may be linked to local deacetylation of histone H3. Represses HNF1A-mediated transcription. Required for the repression of ESRRG by CREBZF. Deacetylates NR1H3 AND NR1H2 and deacetylation of NR1H3 at 'Lys-434' positively regulates transcription of NR1H3:RXR target genes, promotes NR1H3 proteasomal degradation and results in cholesterol efflux; a promoter clearing mechanism after reach round of transcription is proposed. Involved in lipid metabolism: deacetylates LPIN1, thereby inhibiting diacylglycerol synthesis. Implicated in regulation of adipogenesis and fat mobilization in white adipocytes by repression of PPARG which probably involves association with NCOR1 and SMRT/NCOR2. Deacetylates p300/EP300 and PRMT1. Deacetylates ACSS2 leading to its activation, and HMGCS1 deacetylation. Involved in liver and muscle metabolism. Through deacetylation and activation of PPARGC1A is required to activate fatty acid oxidation in skeletal muscle under low-glucose conditions and is involved in glucose homeostasis. Involved in regulation of PPARA and fatty acid beta-oxidation in liver. Involved in positive regulation of insulin secretion in pancreatic beta cells in response to glucose; the function seems to imply transcriptional repression of UCP2. Proposed to deacetylate IRS2 thereby facilitating its insulin-induced tyrosine phosphorylation. Deacetylates SREBF1 isoform SREBP-1C thereby decreasing its stability and transactivation in lipogenic gene expression. Involved in DNA damage response by repressing genes which are involved in DNA repair, such as XPC and TP73, deacetylating XRCC6/Ku70, and facilitating recruitment of additional factors to sites of damaged DNA, such as SIRT1-deacetylated NBN can recruit ATM to initiate DNA repair and SIRT1-deacetylated XPA interacts with RPA2. Also involved in DNA repair of DNA double-strand breaks by homologous recombination and specifically single-strand annealing independently of XRCC6/Ku70 and NBN. Promotes DNA double-strand breaks by mediating deacetylation of SIRT6. Transcriptional suppression of XPC probably involves an E2F4:RBL2 suppressor complex and protein kinase B (AKT) signaling. Transcriptional suppression of TP73 probably involves E2F4 and PCAF. Deacetylates WRN thereby regulating its helicase and exonuclease activities and regulates WRN nuclear translocation in response to DNA damage. Deacetylates APEX1 at 'Lys-6' and 'Lys-7' and stimulates cellular AP endonuclease activity by promoting the association of APEX1 to XRCC1. Catalyzes deacetylation of ERCC4/XPF, thereby impairing interaction with ERCC1 and nucleotide excision repair (NER). Increases p53/TP53-mediated transcription-independent apoptosis by blocking nuclear translocation of cytoplasmic p53/TP53 and probably redirecting it to mitochondria. Deacetylates XRCC6/Ku70 at 'Lys-539' and 'Lys-542' causing it to sequester BAX away from mitochondria thereby inhibiting stress-induced apoptosis. Is involved in autophagy, presumably by deacetylating ATG5, ATG7 and MAP1LC3B/ATG8. Deacetylates AKT1 which leads to enhanced binding of AKT1 and PDK1 to PIP3 and promotes their activation. Proposed to play role in regulation of STK11/LBK1-dependent AMPK signaling pathways implicated in cellular senescence which seems to involve the regulation of the acetylation status of STK11/LBK1. Can deacetylate STK11/LBK1 and thereby increase its activity, cytoplasmic localization and association with STRAD; however, the relevance of such activity in normal cells is unclear. In endothelial cells is shown to inhibit STK11/LBK1 activity and to promote its degradation. Deacetylates SMAD7 at 'Lys-64' and 'Lys-70' thereby promoting its degradation. Deacetylates CIITA and augments its MHC class II transactivation and contributes to its stability. Deacetylates MECOM/EVI1. Deacetylates PML at 'Lys-487' and this deacetylation promotes PML control of PER2 nuclear localization. During the neurogenic transition, represses selective NOTCH1-target genes through histone deacetylation in a BCL6-dependent manner and leading to neuronal differentiation. Regulates the circadian expression of several core clock genes, including BMAL1, RORC, PER2 and CRY1 and plays a critical role in maintaining a controlled rhythmicity in histone acetylation, thereby contributing to circadian chromatin remodeling. Deacetylates BMAL1 and histones at the circadian gene promoters in order to facilitate repression by inhibitory components of the circadian oscillator. Deacetylates PER2, facilitating its ubiquitination and degradation by the proteasome. Protects cardiomyocytes against palmitate-induced apoptosis. Deacetylates XBP1 isoform 2; deacetylation decreases protein stability of XBP1 isoform 2 and inhibits its transcriptional activity. Deacetylates PCK1 and directs its activity toward phosphoenolpyruvate production promoting gluconeogenesis. Involved in the CCAR2-mediated regulation of PCK1 and NR1D1. Deacetylates CTNB1 at 'Lys-49'. In POMC (pro-opiomelanocortin) neurons, required for leptin-induced activation of PI3K signaling. In addition to protein deacetylase activity, also acts as a protein-lysine deacylase by mediating protein depropionylation and decrotonylation. Mediates depropionylation of Osterix (SP7). Catalyzes decrotonylation of histones; it however does not represent a major histone decrotonylase. Deacetylates SOX9; promoting SOX9 nuclear localization and transactivation activity. Involved in the regulation of centrosome duplication. Deacetylates CENATAC in G1 phase, allowing for SASS6 accumulation on the centrosome and subsequent procentriole assembly. Deacetylates NDC80/HEC1. In Rattus norvegicus (Rat), this protein is NAD-dependent protein deacetylase sirtuin-1.